A 295-amino-acid polypeptide reads, in one-letter code: 5,10-methylenetetrahydrofolate reductase (295 aa).

The active-site Proton donor/acceptor is E28. T59 serves as a coordination point for NADH. The FAD site is built by H89, R119, G120, D121, A133, Y153, H157, A160, D166, N169, R172, and K173. D121 lines the (6S)-5-methyl-5,6,7,8-tetrahydrofolate pocket. Q184 contributes to the NADH binding site. Residues Q184, Q220, and K280 each coordinate (6S)-5-methyl-5,6,7,8-tetrahydrofolate.

It belongs to the methylenetetrahydrofolate reductase family. The cofactor is FAD.

The catalysed reaction is (6S)-5-methyl-5,6,7,8-tetrahydrofolate + NAD(+) = (6R)-5,10-methylene-5,6,7,8-tetrahydrofolate + NADH + H(+). Its pathway is one-carbon metabolism; tetrahydrofolate interconversion. It functions in the pathway amino-acid biosynthesis; L-methionine biosynthesis via de novo pathway. Catalyzes the NADH-dependent reduction of 5,10-methylenetetrahydrofolate to 5-methyltetrahydrofolate. Is required to provide the methyl group necessary for methionine synthetase to convert homocysteine to methionine; the methyl group is given by 5-methyltetrahydrofolate. The sequence is that of 5,10-methylenetetrahydrofolate reductase (metF) from Buchnera aphidicola subsp. Baizongia pistaciae (strain Bp).